The sequence spans 395 residues: Digeranylgeranylglycerophospholipid reductase (395 aa).

Residues Ala15, Asp34, Cys45, Ala46, Ala48, Arg97, Ala121, Asp276, and Gly288 each contribute to the FAD site. Arg329 contributes to the a 2,3-bis-O-(geranylgeranyl)-sn-glycerol 1-phospholipid binding site.

This sequence belongs to the geranylgeranyl reductase family. DGGGPL reductase subfamily. It depends on FAD as a cofactor.

The enzyme catalyses a 2,3-bis-O-phytanyl-sn-glycerol 1-phospholipid + 8 A = a 2,3-bis-O-(geranylgeranyl)-sn-glycerol 1-phospholipid + 8 AH2. It catalyses the reaction 2,3-bis-O-(phytanyl)-sn-glycerol 1-phosphate + 8 A = 2,3-bis-O-(geranylgeranyl)-sn-glycerol 1-phosphate + 8 AH2. It carries out the reaction CDP-2,3-bis-O-(geranylgeranyl)-sn-glycerol + 8 AH2 = CDP-2,3-bis-O-(phytanyl)-sn-glycerol + 8 A. The catalysed reaction is archaetidylserine + 8 AH2 = 2,3-bis-O-phytanyl-sn-glycero-3-phospho-L-serine + 8 A. Its pathway is membrane lipid metabolism; glycerophospholipid metabolism. Functionally, is involved in the reduction of 2,3-digeranylgeranylglycerophospholipids (unsaturated archaeols) into 2,3-diphytanylglycerophospholipids (saturated archaeols) in the biosynthesis of archaeal membrane lipids. Catalyzes the formation of archaetidic acid (2,3-di-O-phytanyl-sn-glyceryl phosphate) from 2,3-di-O-geranylgeranylglyceryl phosphate (DGGGP) via the hydrogenation of each double bond of the isoprenoid chains. Is also probably able to reduce double bonds of geranyl groups in CDP-2,3-bis-O-(geranylgeranyl)-sn-glycerol and archaetidylserine, thus acting at various stages in the biosynthesis of archaeal membrane lipids. This chain is Digeranylgeranylglycerophospholipid reductase, found in Thermococcus kodakarensis (strain ATCC BAA-918 / JCM 12380 / KOD1) (Pyrococcus kodakaraensis (strain KOD1)).